We begin with the raw amino-acid sequence, 98 residues long: N(2)-fixation sustaining protein CowN (98 aa).

Belongs to the CowN family.

In terms of biological role, is required to sustain N(2)-dependent growth in the presence of low levels of carbon monoxide (CO). Probably acts by protecting the N(2) fixation ability of the nitrogenase complex, which is inactivated in the presence of CO. The chain is N(2)-fixation sustaining protein CowN from Paramagnetospirillum magneticum (strain ATCC 700264 / AMB-1) (Magnetospirillum magneticum).